The sequence spans 131 residues: uncharacterized protein (131 aa).

The disordered stretch occupies residues 112-131 (LTDNPGAVRKSQKSLIPPYN).

This is an uncharacterized protein from Fowl adenovirus A serotype 1 (strain CELO / Phelps) (FAdV-1).